The following is a 228-amino-acid chain: Small ribosomal subunit protein uS2 (228 aa).

Belongs to the universal ribosomal protein uS2 family.

The sequence is that of Small ribosomal subunit protein uS2 from Blochmanniella pennsylvanica (strain BPEN).